The following is a 97-amino-acid chain: Putative pterin-4-alpha-carbinolamine dehydratase (97 aa).

This sequence belongs to the pterin-4-alpha-carbinolamine dehydratase family.

The enzyme catalyses (4aS,6R)-4a-hydroxy-L-erythro-5,6,7,8-tetrahydrobiopterin = (6R)-L-erythro-6,7-dihydrobiopterin + H2O. The protein is Putative pterin-4-alpha-carbinolamine dehydratase of Phenylobacterium zucineum (strain HLK1).